The chain runs to 180 residues: Large ribosomal subunit protein uL6 (180 aa).

The protein belongs to the universal ribosomal protein uL6 family. In terms of assembly, part of the 50S ribosomal subunit.

Functionally, this protein binds to the 23S rRNA, and is important in its secondary structure. It is located near the subunit interface in the base of the L7/L12 stalk, and near the tRNA binding site of the peptidyltransferase center. The polypeptide is Large ribosomal subunit protein uL6 (Borrelia duttonii (strain Ly)).